Reading from the N-terminus, the 176-residue chain is MAASTDIAGLEESFRKFAIHGDPKASGQEMNGKNWAKLCKDCKVADGKAVTGTDVDIVFSKVKAKSARVINYEEFKKALEELATKRFKGKTKEEAFDAICQLIAGKEPANIGVTKAKTGGAVDRLTDTSKYTGSHKERFDESGKGKGIAGRQDILDDSGYVSAYKNAGTYDAKVKK.

A2 carries the N-acetylalanine modification.

The protein belongs to the TPPP family.

The protein localises to the cytoplasm. Its subcellular location is the cytoskeleton. Its function is as follows. Regulator of microtubule dynamic that has microtubule bundling activity. Required for embryo implantation; possibly by regulating beta-catenin. Also required for decidualization via regulation of beta-catenin. The protein is Tubulin polymerization-promoting protein family member 3 (Tppp3) of Rattus norvegicus (Rat).